The sequence spans 763 residues: Heat shock 70 kDa protein 16 (763 aa).

Disordered stretches follow at residues 509–529 (ISEE…PSSG) and 701–763 (EKTT…MELD). At S528 the chain carries Phosphoserine. Positions 701 to 714 (EKTTEQESLPKDAN) are enriched in basic and acidic residues.

Belongs to the heat shock protein 70 (TC 1.A.33) family. HSP110/SSE subfamily.

The protein is Heat shock 70 kDa protein 16 (HSP70-16) of Arabidopsis thaliana (Mouse-ear cress).